The following is a 55-amino-acid chain: Large ribosomal subunit protein eL37 (55 aa).

Zn(2+)-binding residues include Cys20, Cys23, Cys35, and Cys38. The C4-type zinc-finger motif lies at 20-38; the sequence is CRRCGKNSYHKRHHRCSSC.

It belongs to the eukaryotic ribosomal protein eL37 family. The cofactor is Zn(2+).

Binds to the 23S rRNA. This Cenarchaeum symbiosum (strain A) protein is Large ribosomal subunit protein eL37.